The following is a 64-amino-acid chain: Large ribosomal subunit protein bL35 (64 aa).

Positions Met1–Thr41 are disordered.

The protein belongs to the bacterial ribosomal protein bL35 family.

The sequence is that of Large ribosomal subunit protein bL35 from Nocardia farcinica (strain IFM 10152).